The following is a 492-amino-acid chain: MAAGPIRVVLVLLGVLSVCAASGHGSVAEREAGGEAEWAEPWDGAVFRPPSALGAVGVTRSSGTPRPGREEAGDLPVLLWWSPGLFPHFPGDSERIECARGACVASRNRRALRDSRTRALLFYGTDFRASAAPLPRLAHQSWALLHEESPLNNFLLSHGPGIRLFNLTSTFSRHSDYPLSLQWLPGTAYLRRPVPPPMERAEWRRRGYAPLLYLQSHCDVPADRDRYVRELMRHIPVDSYGKCLQNRELPTARLQDTATATTEDPELLAFLSRYKFHLALENAICNDYMTEKLWRPMHLGAVPVYRGSPSVRDWMPNNHSVILIDDFESPQKLAEFIDFLDKNDEEYMKYLAYKQPGGITNQFLLDSLKHREWGVNDPLLPNYLNGFECFVCDYELARLDAEKAHAASPGDSPVFEPHIAQPSHMDCPVPTPGFGNVEEIPENDSWKEMWLQDYWQGLDQGEALTAMIHNNETEQTKFWDYLHEIFMKRQHL.

Residues 1-7 (MAAGPIR) lie on the Cytoplasmic side of the membrane. Residues 8-24 (VVLVLLGVLSVCAASGH) traverse the membrane as a helical; Signal-anchor for type II membrane protein segment. Over 25–492 (GSVAEREAGG…HEIFMKRQHL (468 aa)) the chain is Lumenal. Residue Asn166 is glycosylated (N-linked (GlcNAc...) asparagine). Cys389 and Cys392 are oxidised to a cystine. N-linked (GlcNAc...) asparagine glycosylation occurs at Asn443.

It belongs to the glycosyltransferase 10 family.

The protein resides in the endoplasmic reticulum membrane. The enzyme catalyses L-threonyl-[protein] + GDP-beta-L-fucose = 3-O-(alpha-L-fucosyl)-L-threonyl-[protein] + GDP + H(+). It carries out the reaction L-seryl-[protein] + GDP-beta-L-fucose = 3-O-(alpha-L-fucosyl)-L-seryl-[protein] + GDP + H(+). It participates in protein modification; protein glycosylation. Its function is as follows. Protein O-fucosyltransferase that specifically catalyzes O-fucosylation of serine or threonine residues in EMI domains of target proteins, such as MMRN1, MMRN2 and EMID1. Attaches fucose through an O-glycosidic linkage. O-fucosylation of EMI domain-containing proteins may be required for facilitating protein folding and secretion. Also shows minor alpha-(1,3)-fucosyltransferase activity toward activity toward biantennary N-glycan acceptors. However, this was tested with a library of synthetic substrates and this activity is unsure in vivo. In Homo sapiens (Human), this protein is GDP-fucose protein O-fucosyltransferase 4.